A 712-amino-acid polypeptide reads, in one-letter code: MTHLSPEAFAIIEGRHADPFRYLGQHDVDGRTVIRAFLPEASRVEAVGDNGEVAPLARIHDAGLFTGTMSGPQRYRLRATFGDHVTDLEDPYRFLPILTDFDLHLLGEGNHERLYDKLGAHPMVLDGVDGVGFVVLAPNARRVSVVGDFNFWNARRHPMRVRGNGYWELFIPRAKAGDHYKFDIIGPQGEHLPLKSDPMAFAAEMRPKTASIVVDETRLPRPRPAPSDINKLDRPVSIYEVHLGSWRRKDNNQWLTYRELAEQLPAYARDMGFTHIEFLPVSEHPFDGSWGYQPTGLFAPTSRFGSPEDFCALVDACHREGLAVWLDWVPGHFPDDPHGLGHFDGTALYEHANPMQGRHLDWGTLIYNYGRTEVANFLRSNALFWLERYGIDGLRVDAVASMLYLDYSRPSGGWIPNKYGGRENLEAIEFLRRTNIEVFGHFPQATTAAEESTAWPQVSRPVDIGGLGFGYKWNMGWMHDTLRYVGKDPIHRKYHHGEILFGLHYAFSENFILPLSHDEVVHGKRSILGRMPGDDWQRFANLRAYYSFMFGHPGKKLLFMGCEIAQEREWNHDSSLDWHLLGDAKYAGIQALIRDLNHLYRNQPALHERDCEPEGFDWLITEDADRNVFAWVRKGFDERARCVVVVNFSPNVYYNYRVRVPLGGTWREVFNSDSSHYGGSNVGNVGQVHASEDQQLNLILPPMAAVFLVPEA.

Asp-397 acts as the Nucleophile in catalysis. The active-site Proton donor is Glu-450.

The protein belongs to the glycosyl hydrolase 13 family. GlgB subfamily. Monomer.

It carries out the reaction Transfers a segment of a (1-&gt;4)-alpha-D-glucan chain to a primary hydroxy group in a similar glucan chain.. The protein operates within glycan biosynthesis; glycogen biosynthesis. Catalyzes the formation of the alpha-1,6-glucosidic linkages in glycogen by scission of a 1,4-alpha-linked oligosaccharide from growing alpha-1,4-glucan chains and the subsequent attachment of the oligosaccharide to the alpha-1,6 position. The chain is 1,4-alpha-glucan branching enzyme GlgB from Bradyrhizobium sp. (strain BTAi1 / ATCC BAA-1182).